A 464-amino-acid chain; its full sequence is Argininosuccinate lyase (464 aa).

It belongs to the lyase 1 family. Argininosuccinate lyase subfamily.

It is found in the cytoplasm. It carries out the reaction 2-(N(omega)-L-arginino)succinate = fumarate + L-arginine. Its pathway is amino-acid biosynthesis; L-arginine biosynthesis; L-arginine from L-ornithine and carbamoyl phosphate: step 3/3. Strongly inhibited by L-arginine. Inhibitory effects are lowered at pH 7.0 compared to those at pH 8.0. At 37 degrees Celsius and pH 7.5, activity decreases to 73% and 31% in the presence of 1 mM and 10 mM arginine, respectively. Activity also decreases to 84%, 93%, 82% and 85% in the presence of 10 mM sodium citrate, citrulline, asparatate and glutamate, respectively. Activity decreases to 96% in presence of 1 mM L-lysine. In terms of biological role, catalyzes the last step of arginine biosynthesis, the conversion of argininosuccinate into L-arginine and fumarate. This is Argininosuccinate lyase from Arthrospira platensis (strain NIES-39 / UTEX 3086 / IAM M-135) (Spirulina platensis).